The chain runs to 208 residues: Thymidylate kinase (208 aa).

An ATP-binding site is contributed by 10-17 (GPEGSGKT).

It belongs to the thymidylate kinase family.

It catalyses the reaction dTMP + ATP = dTDP + ADP. In terms of biological role, phosphorylation of dTMP to form dTDP in both de novo and salvage pathways of dTTP synthesis. The polypeptide is Thymidylate kinase (Bacillus cereus (strain B4264)).